A 262-amino-acid polypeptide reads, in one-letter code: Thiazole synthase (262 aa).

Catalysis depends on K97, which acts as the Schiff-base intermediate with DXP. Residues G158, 185–186 (AG), and 207–208 (NT) contribute to the 1-deoxy-D-xylulose 5-phosphate site.

Belongs to the ThiG family. In terms of assembly, homotetramer. Forms heterodimers with either ThiH or ThiS.

It is found in the cytoplasm. It catalyses the reaction [ThiS sulfur-carrier protein]-C-terminal-Gly-aminoethanethioate + 2-iminoacetate + 1-deoxy-D-xylulose 5-phosphate = [ThiS sulfur-carrier protein]-C-terminal Gly-Gly + 2-[(2R,5Z)-2-carboxy-4-methylthiazol-5(2H)-ylidene]ethyl phosphate + 2 H2O + H(+). Its pathway is cofactor biosynthesis; thiamine diphosphate biosynthesis. Catalyzes the rearrangement of 1-deoxy-D-xylulose 5-phosphate (DXP) to produce the thiazole phosphate moiety of thiamine. Sulfur is provided by the thiocarboxylate moiety of the carrier protein ThiS. In vitro, sulfur can be provided by H(2)S. The protein is Thiazole synthase of Neisseria gonorrhoeae (strain ATCC 700825 / FA 1090).